The primary structure comprises 380 residues: uncharacterized protein (380 aa).

This is an uncharacterized protein from Homo sapiens (Human).